We begin with the raw amino-acid sequence, 275 residues long: NH(3)-dependent NAD(+) synthetase (275 aa).

50–57 (GISGGVDS) serves as a coordination point for ATP. Asp56 contributes to the Mg(2+) binding site. Position 147 (Arg147) interacts with deamido-NAD(+). Thr167 contacts ATP. Residue Glu172 participates in Mg(2+) binding. Deamido-NAD(+) is bound by residues Lys180 and Asp187. ATP-binding residues include Lys196 and Thr218. 267–268 (HK) is a binding site for deamido-NAD(+).

This sequence belongs to the NAD synthetase family. In terms of assembly, homodimer.

The catalysed reaction is deamido-NAD(+) + NH4(+) + ATP = AMP + diphosphate + NAD(+) + H(+). The protein operates within cofactor biosynthesis; NAD(+) biosynthesis; NAD(+) from deamido-NAD(+) (ammonia route): step 1/1. Its function is as follows. Catalyzes the ATP-dependent amidation of deamido-NAD to form NAD. Uses ammonia as a nitrogen source. The protein is NH(3)-dependent NAD(+) synthetase of Pseudomonas aeruginosa (strain LESB58).